An 85-amino-acid chain; its full sequence is Large ribosomal subunit protein bL27 (85 aa).

Positions 1–20 (MAHKKAGGSTRNGRDSEAKR) are disordered.

Belongs to the bacterial ribosomal protein bL27 family.

This chain is Large ribosomal subunit protein bL27, found in Salmonella agona (strain SL483).